The chain runs to 448 residues: Tryptophan dimethylallyltransferase 2 (448 aa).

L-tryptophan contacts are provided by residues 80-81 (IL) and Glu89. Substrate-binding residues include Arg100, Lys186, and Tyr188. Residues Tyr190 and Arg249 each coordinate L-tryptophan. Arg262, Lys264, Tyr266, Gln348, Tyr350, Tyr414, and Tyr418 together coordinate substrate.

It belongs to the tryptophan dimethylallyltransferase family. Homodimer.

It carries out the reaction L-tryptophan + dimethylallyl diphosphate = 4-(3-methylbut-2-enyl)-L-tryptophan + diphosphate. Its pathway is alkaloid biosynthesis; ergot alkaloid biosynthesis. Catalyzes the first step of ergot alkaloid biosynthesis. Ergot alkaloids, which are produced by endophyte fungi, can enhance plant host fitness, but also cause livestock toxicosis to host plants. This Claviceps purpurea (strain 20.1) (Ergot fungus) protein is Tryptophan dimethylallyltransferase 2 (dmaW2).